The chain runs to 484 residues: 3-isopropylmalate dehydratase large subunit (484 aa).

The [4Fe-4S] cluster site is built by cysteine 352, cysteine 412, and cysteine 415. Residues 463–484 (TLSSPSDLDPAPASAAIRTDAA) form a disordered region. The segment covering 464-478 (LSSPSDLDPAPASAA) has biased composition (low complexity).

The protein belongs to the aconitase/IPM isomerase family. LeuC type 1 subfamily. Heterodimer of LeuC and LeuD. It depends on [4Fe-4S] cluster as a cofactor.

The catalysed reaction is (2R,3S)-3-isopropylmalate = (2S)-2-isopropylmalate. It functions in the pathway amino-acid biosynthesis; L-leucine biosynthesis; L-leucine from 3-methyl-2-oxobutanoate: step 2/4. In terms of biological role, catalyzes the isomerization between 2-isopropylmalate and 3-isopropylmalate, via the formation of 2-isopropylmaleate. The sequence is that of 3-isopropylmalate dehydratase large subunit from Pseudarthrobacter chlorophenolicus (strain ATCC 700700 / DSM 12829 / CIP 107037 / JCM 12360 / KCTC 9906 / NCIMB 13794 / A6) (Arthrobacter chlorophenolicus).